The primary structure comprises 363 residues: Protein LEG1 homolog (363 aa).

Positions 1–19 (MQCVWTLSLLQLVALWANA) are cleaved as a signal peptide. N-linked (GlcNAc...) asparagine glycosylation is found at Asn79, Asn261, and Asn292.

This sequence belongs to the LEG1 family.

The protein localises to the secreted. Its function is as follows. May be involved in early liver development. This is Protein LEG1 homolog from Oncorhynchus mykiss (Rainbow trout).